The following is a 371-amino-acid chain: Histidinol-phosphate aminotransferase (371 aa).

Lys-228 carries the post-translational modification N6-(pyridoxal phosphate)lysine.

It belongs to the class-II pyridoxal-phosphate-dependent aminotransferase family. Histidinol-phosphate aminotransferase subfamily. The cofactor is pyridoxal 5'-phosphate.

The catalysed reaction is L-histidinol phosphate + 2-oxoglutarate = 3-(imidazol-4-yl)-2-oxopropyl phosphate + L-glutamate. It participates in amino-acid biosynthesis; L-histidine biosynthesis; L-histidine from 5-phospho-alpha-D-ribose 1-diphosphate: step 7/9. This Methanococcus maripaludis (strain C6 / ATCC BAA-1332) protein is Histidinol-phosphate aminotransferase.